A 145-amino-acid chain; its full sequence is I-leader protein (145 aa).

Its subcellular location is the host cytoplasm. It is found in the host perinuclear region. This is I-leader protein from Human adenovirus C serotype 2 (HAdV-2).